The following is a 496-amino-acid chain: Xylulose kinase (496 aa).

Residue 83–84 (MH) participates in substrate binding. Catalysis depends on aspartate 237, which acts as the Proton acceptor.

It belongs to the FGGY kinase family.

The catalysed reaction is D-xylulose + ATP = D-xylulose 5-phosphate + ADP + H(+). Functionally, catalyzes the phosphorylation of D-xylulose to D-xylulose 5-phosphate. The chain is Xylulose kinase from Staphylococcus epidermidis (strain ATCC 35984 / DSM 28319 / BCRC 17069 / CCUG 31568 / BM 3577 / RP62A).